The primary structure comprises 461 residues: Glycine--tRNA ligase (461 aa).

Residues R100 and E163 each contribute to the substrate site. ATP contacts are provided by residues 195 to 197 (RNE), 205 to 210 (FRTREF), 282 to 283 (EL), and 326 to 329 (GLGR). 210–214 (FEQME) is a substrate binding site. 322-326 (EPAAG) contacts substrate.

It belongs to the class-II aminoacyl-tRNA synthetase family. In terms of assembly, homodimer.

It is found in the cytoplasm. The catalysed reaction is tRNA(Gly) + glycine + ATP = glycyl-tRNA(Gly) + AMP + diphosphate. In terms of biological role, catalyzes the attachment of glycine to tRNA(Gly). This is Glycine--tRNA ligase from Corynebacterium glutamicum (strain ATCC 13032 / DSM 20300 / JCM 1318 / BCRC 11384 / CCUG 27702 / LMG 3730 / NBRC 12168 / NCIMB 10025 / NRRL B-2784 / 534).